Reading from the N-terminus, the 377-residue chain is Succinyl-diaminopimelate desuccinylase (377 aa).

Residue His-67 coordinates Zn(2+). Asp-69 is an active-site residue. Zn(2+) is bound at residue Asp-100. Glu-134 acts as the Proton acceptor in catalysis. The Zn(2+) site is built by Glu-135, Glu-163, and His-349.

The protein belongs to the peptidase M20A family. DapE subfamily. In terms of assembly, homodimer. Zn(2+) is required as a cofactor. The cofactor is Co(2+).

The catalysed reaction is N-succinyl-(2S,6S)-2,6-diaminopimelate + H2O = (2S,6S)-2,6-diaminopimelate + succinate. It functions in the pathway amino-acid biosynthesis; L-lysine biosynthesis via DAP pathway; LL-2,6-diaminopimelate from (S)-tetrahydrodipicolinate (succinylase route): step 3/3. Functionally, catalyzes the hydrolysis of N-succinyl-L,L-diaminopimelic acid (SDAP), forming succinate and LL-2,6-diaminopimelate (DAP), an intermediate involved in the bacterial biosynthesis of lysine and meso-diaminopimelic acid, an essential component of bacterial cell walls. The sequence is that of Succinyl-diaminopimelate desuccinylase from Mannheimia succiniciproducens (strain KCTC 0769BP / MBEL55E).